Reading from the N-terminus, the 379-residue chain is Sensor histidine kinase YhcY (379 aa).

Residues 185-373 (RLAQELHDSV…KLSIRLPLKS (189 aa)) form the Histidine kinase domain. Phosphohistidine; by autocatalysis is present on histidine 191.

It carries out the reaction ATP + protein L-histidine = ADP + protein N-phospho-L-histidine.. Its function is as follows. Member of the two-component regulatory system YhcY/YhcZ. Probably activates YhcZ by phosphorylation. This chain is Sensor histidine kinase YhcY (yhcY), found in Bacillus subtilis (strain 168).